A 332-amino-acid polypeptide reads, in one-letter code: 5-dehydro-2-deoxygluconokinase 2 (332 aa).

It belongs to the carbohydrate kinase PfkB family.

It carries out the reaction 5-dehydro-2-deoxy-D-gluconate + ATP = 6-phospho-5-dehydro-2-deoxy-D-gluconate + ADP + H(+). It participates in polyol metabolism; myo-inositol degradation into acetyl-CoA; acetyl-CoA from myo-inositol: step 5/7. In terms of biological role, catalyzes the phosphorylation of 5-dehydro-2-deoxy-D-gluconate (2-deoxy-5-keto-D-gluconate or DKG) to 6-phospho-5-dehydro-2-deoxy-D-gluconate (DKGP). In Bacillus cereus (strain ZK / E33L), this protein is 5-dehydro-2-deoxygluconokinase 2.